The following is a 404-amino-acid chain: MDNPFARFAGTRTIQANLSLLEENYVPDSFPHRENQINEMVTILSSIMRGSRPSNIIVYGKTGTGKTSTTKYVTKMLVEAASNVSVVYVNCEIYDSPYSILVAIANSAGEEKIPELGWPIDRIYRETVERVEKTGKFFIIILDEMDRLIKKNGGDSLYVLLKLMTDVDSVRVSMIGITNDTTVLENIDARIKSRLNQESIVFPPYNASEIRDIISSRLDKVLGPGVVDDTAINLCAAIGAQEHGDARKAIDLMRIAIEIAIRENRNKITENEIYEARERYEMNVLREAISTLPLHSKIVLLSAVVTQEIEPNSVITGEIYENYRRICDDLGFSPLSPRRISDLLTELADYGLLVMDDRNMGKYGRTRSFSVVHQAETIKKYLLEDENLSMFKSSKMPKQTRFDT.

ATP contacts are provided by residues 64–68, Y205, and R217; that span reads TGKTS.

The protein belongs to the CDC6/cdc18 family. In terms of assembly, interacts with MCM.

Functionally, involved in regulation of DNA replication. Stimulates the helicase activity of MCM via stimulation of its ATPase activity. Binding to MCM may result in conformational changes in MCM, leading to catalytic ATP hydrolysis by the helicase. Directly stimulates MCM movement along single-stranded and double-stranded DNA. Does not bind DNA. The polypeptide is ORC1-type DNA replication protein 2 (cdc6-2) (Thermoplasma acidophilum (strain ATCC 25905 / DSM 1728 / JCM 9062 / NBRC 15155 / AMRC-C165)).